We begin with the raw amino-acid sequence, 291 residues long: Beta-lactamase CTX-M-8 (291 aa).

Positions 1–30 (MMRHRVKRMMLMTTACISLLLGSAPLYAQA) are cleaved as a signal peptide. Ser73 functions as the Nucleophile; acyl-ester intermediate in the catalytic mechanism. A beta-lactam contacts are provided by Lys76, Ser133, Glu169, and Ser240.

It belongs to the class-A beta-lactamase family. In terms of assembly, monomer.

It localises to the secreted. The enzyme catalyses a beta-lactam + H2O = a substituted beta-amino acid. Its activity is regulated as follows. Inhibited by the beta-lactamase-blocking agents clavulanic acid, tazobactam and sulbactam; in the DH5alpha strain of E.coli. Extended-spectrum beta-lactamase (ESBL) which confers resistance to penicillins, as well as first, third and fourth-generation cephalosporins. Has cefotaxime-hydrolyzing activity. Inactive against cephalosporin antibiotic, cefoxitin, and the carbapenem, imipenem. In Citrobacter amalonaticus, this protein is Beta-lactamase CTX-M-8.